A 185-amino-acid polypeptide reads, in one-letter code: Large ribosomal subunit protein uL5 (185 aa).

It belongs to the universal ribosomal protein uL5 family. As to quaternary structure, part of the 50S ribosomal subunit; part of the 5S rRNA/L5/L18/L25 subcomplex. Contacts the 5S rRNA and the P site tRNA. Forms a bridge to the 30S subunit in the 70S ribosome.

In terms of biological role, this is one of the proteins that bind and probably mediate the attachment of the 5S RNA into the large ribosomal subunit, where it forms part of the central protuberance. In the 70S ribosome it contacts protein S13 of the 30S subunit (bridge B1b), connecting the 2 subunits; this bridge is implicated in subunit movement. Contacts the P site tRNA; the 5S rRNA and some of its associated proteins might help stabilize positioning of ribosome-bound tRNAs. The polypeptide is Large ribosomal subunit protein uL5 (Bartonella quintana (strain Toulouse) (Rochalimaea quintana)).